Here is a 789-residue protein sequence, read N- to C-terminus: Probable 3-hydroxyacyl-CoA dehydrogenase (789 aa).

Belongs to the 3-hydroxyacyl-CoA dehydrogenase family.

It carries out the reaction a (3S)-3-hydroxyacyl-CoA + NAD(+) = a 3-oxoacyl-CoA + NADH + H(+). The protein operates within lipid metabolism; fatty acid beta-oxidation. Its function is as follows. Involved in the degradation of long-chain fatty acids. This chain is Probable 3-hydroxyacyl-CoA dehydrogenase (fadN), found in Bacillus subtilis (strain 168).